The chain runs to 408 residues: tRNA-specific 2-thiouridylase MnmA (408 aa).

ATP-binding positions include 20 to 27 (AMSGGVDS) and leucine 46. The active-site Nucleophile is the cysteine 114. A disulfide bridge links cysteine 114 with cysteine 210. Glycine 138 serves as a coordination point for ATP. The interval 160–162 (RDQ) is interaction with tRNA. The active-site Cysteine persulfide intermediate is the cysteine 210.

This sequence belongs to the MnmA/TRMU family.

It localises to the cytoplasm. It catalyses the reaction S-sulfanyl-L-cysteinyl-[protein] + uridine(34) in tRNA + AH2 + ATP = 2-thiouridine(34) in tRNA + L-cysteinyl-[protein] + A + AMP + diphosphate + H(+). Catalyzes the 2-thiolation of uridine at the wobble position (U34) of tRNA, leading to the formation of s(2)U34. This Bartonella quintana (strain Toulouse) (Rochalimaea quintana) protein is tRNA-specific 2-thiouridylase MnmA.